The sequence spans 283 residues: Protein FAM170B (283 aa).

The span at 1–11 (MKCYFTDHRGE) shows a compositional bias: basic and acidic residues. Disordered stretches follow at residues 1 to 58 (MKCY…REEG) and 246 to 283 (AQGQ…QEKQ).

This sequence belongs to the FAM170 family. As to quaternary structure, interacts with GOPC. In terms of tissue distribution, exclusively expressed in adult testis.

It is found in the cytoplasmic vesicle. The protein localises to the secretory vesicle. It localises to the acrosome. The protein resides in the acrosome outer membrane. In terms of biological role, plays a role in fertilization through the acrosome reaction. The chain is Protein FAM170B from Homo sapiens (Human).